Consider the following 518-residue polypeptide: Nicotine N-demethylase CYP82E3 (518 aa).

The helical transmembrane segment at 2–22 threads the bilayer; the sequence is VFPVEAIVGLVTFTFLFYFLW. A Glycyl lysine isopeptide (Lys-Gly) (interchain with G-Cter in ubiquitin) cross-link involves residue Lys-254. A heme-binding site is contributed by Cys-458.

The protein belongs to the cytochrome P450 family. CYP82E2 subfamily. It depends on heme as a cofactor. In terms of tissue distribution, expressed in leaves.

It localises to the membrane. The catalysed reaction is (S)-nicotine + reduced [NADPH--hemoprotein reductase] + O2 = (S)-nornicotine + formaldehyde + oxidized [NADPH--hemoprotein reductase] + H2O + H(+). Its pathway is alkaloid biosynthesis; nicotine biosynthesis. Its function is as follows. Involved in the biosynthesis of pyridine alkaloid natural products, leading mainly to the production of anabasine, anatabine, nicotine and nornicotine, effective deterrents against herbivores with antiparasitic and pesticide properties (neurotoxins); nornicotine serves as the precursor in the synthesis of the carcinogen compound N'-nitrosonornicotine (NNN). Catalyzes the demethylation of nicotine to form nornicotine. This chain is Nicotine N-demethylase CYP82E3, found in Nicotiana tomentosiformis (Tobacco).